The sequence spans 456 residues: Enolase (456 aa).

A (2R)-2-phosphoglycerate-binding site is contributed by Gln169. Catalysis depends on Glu211, which acts as the Proton donor. The Mg(2+) site is built by Asp252, Glu314, and Asp341. (2R)-2-phosphoglycerate is bound by residues Lys366, Arg395, Ser396, and Lys417. The Proton acceptor role is filled by Lys366.

This sequence belongs to the enolase family. The cofactor is Mg(2+).

Its subcellular location is the cytoplasm. The protein localises to the secreted. It localises to the cell surface. The enzyme catalyses (2R)-2-phosphoglycerate = phosphoenolpyruvate + H2O. It participates in carbohydrate degradation; glycolysis; pyruvate from D-glyceraldehyde 3-phosphate: step 4/5. Its function is as follows. Catalyzes the reversible conversion of 2-phosphoglycerate (2-PG) into phosphoenolpyruvate (PEP). It is essential for the degradation of carbohydrates via glycolysis. This chain is Enolase, found in Metamycoplasma arthritidis (strain 158L3-1) (Mycoplasma arthritidis).